Here is a 660-residue protein sequence, read N- to C-terminus: MQENLRFASSGDDIKIWDASSMTLVDKFNPHTSPHGISSICWSSNNNFLVTASSSGDKIVVSSCKCKPVPLLELAEGQKQTCVNLNSTSMYLVSGGLNNTVNIWDLKSKRVHRSLKDHKDQVTCVTYNWNDCYIASGSLSGEIILHSVTTNLSSTPFGHGSNQSVRHLKYSLFKKSLLGSVSDNGIVTLWDVNSQSPYHNFDSVHKAPASGICFSPVNELLFVTIGLDKRIILYDTSSKKLVKTLVADTPLTAVDFMPDGATLAIGSSRGKIYQYDLRMLKSPVKTISAHKTSVQCIAFQYSTVLTKSSLNKGCSNKPTTVNKRSVNVNAASGGVQNSGIVREAPATSIATVLPQPMTSAMGKGTVAVQEKAGLPRSINTDTLSKETDSGKNQDFSSFDDTGKSSLGDMFSPIRDDAVVNKGSDESIGKGDGFDFLPQLNSVFPPRKNPVTSSTSVLHSSPLNVFMGSPGKEENENRDLTAESKKIYMGKQESKDSFKQLAKLVTSGAESGNLNTSPSSNQTRNSEKFEKPENEIEAQLICEPPINGSSTPNPKIASSVTAGVASSLSEKIADSIGNNRQNAPLTSIQIRFIQNMIQETLDDFREACHRDIVNLQVEMIKQFHMQLNEMHSLLERYSVNEGLVAEIERLREENKRLRAHF.

WD repeat units lie at residues 1 to 31 (MQEN…FNPH), 32 to 71 (TSPH…PVPL), 75 to 114 (AEGQ…VHRS), 117 to 156 (DHKD…SSTP), 160 to 200 (GSNQ…PYHN), 204 to 244 (VHKA…LVKT), 246 to 285 (VADT…SPVK), and 289 to 332 (AHKT…NAAS). The residue at position 325 (Ser-325) is a Phosphoserine. The tract at residues 369 to 411 (QEKAGLPRSINTDTLSKETDSGKNQDFSSFDDTGKSSLGDMFS) is disordered. Thr-382 carries the post-translational modification Phosphothreonine; by PLK1. A Phosphoserine; by PLK1 modification is found at Ser-397. Phosphoserine is present on Ser-411. Ser-426 is subject to Phosphoserine; by PLK1. Ser-468 and Ser-516 each carry phosphoserine. The segment covering 507 to 523 (GAESGNLNTSPSSNQTR) has biased composition (polar residues). Residues 507–532 (GAESGNLNTSPSSNQTRNSEKFEKPE) are disordered. Phosphothreonine; by CDK1 is present on Thr-550. At Ser-637 the chain carries Phosphoserine; by PLK1.

As to quaternary structure, interacts with FAM29A. Interacts with HSPA1A and HSPA1B. Interacts with gamma-tubulin in a HSPA1A/B-dependent manner. Post-translationally, during mitosis, prior phosphorylation on Thr-550 by CDK1 promotes subsequent phosphorylation by PLK1 on Thr-382, Ser-397, Ser-426 and Ser-637. Phosphorylated NEDD1 can interact with gamma-tubulin for targeting the gamma-tubulin ring complex (gTuRC) to the centrosome, an important step for spindle formation.

It localises to the cytoplasm. Its subcellular location is the cytoskeleton. The protein localises to the microtubule organizing center. It is found in the centrosome. Functionally, required for mitosis progression. Promotes the nucleation of microtubules from the spindle. The sequence is that of Protein NEDD1 (NEDD1) from Homo sapiens (Human).